A 375-amino-acid polypeptide reads, in one-letter code: F-box/kelch-repeat protein At4g39240 (375 aa).

Low complexity predominate over residues 1 to 15 (MPFSAASSSSVSSIA). Positions 1–27 (MPFSAASSSSVSSIAEEPPPKKQHDPS) are disordered. Residues 31 to 77 (SSYLLLLPDEIILNCLARLPKCYYPVISLVSKTFRRLIASPEIYVER) form the F-box domain. Kelch repeat units follow at residues 140-186 (EIYV…FFDG), 187-232 (KLYV…RSFA), and 275-321 (KIYT…GNLA).

The chain is F-box/kelch-repeat protein At4g39240 from Arabidopsis thaliana (Mouse-ear cress).